The primary structure comprises 244 residues: 5-oxoprolinase subunit A (244 aa).

This sequence belongs to the LamB/PxpA family. As to quaternary structure, forms a complex composed of PxpA, PxpB and PxpC.

It carries out the reaction 5-oxo-L-proline + ATP + 2 H2O = L-glutamate + ADP + phosphate + H(+). Its function is as follows. Catalyzes the cleavage of 5-oxoproline to form L-glutamate coupled to the hydrolysis of ATP to ADP and inorganic phosphate. This chain is 5-oxoprolinase subunit A, found in Salmonella paratyphi C (strain RKS4594).